The following is a 412-amino-acid chain: Heat stress transcription factor A-3 (412 aa).

The DNA-binding element occupies 53-147 (IPPFLSKTFD…LLKNIHRRRS (95 aa)). The disordered stretch occupies residues 144–170 (RRRSPQSNQTCCSSTSQSQGSPTEVGG). Over residues 148-166 (PQSNQTCCSSTSQSQGSPT) the composition is skewed to low complexity. Positions 159–225 (SQSQGSPTEV…QLLSFLAKLF (67 aa)) are hydrophobic repeat HR-A/B. Positions 166-224 (TEVGGEIEKLRKERRALMEEMVELQQQSRGTARHVDTVNQRLKAAEQRQKQLLSFLAKL) form a coiled coil. Residues 238 to 254 (KGKEKGGALGLEKARKK) carry the Bipartite nuclear localization signal motif. The short motif at 277–286 (DDWERLLMYD) is the AHA1 element. The short motif at 381–390 (DVCWEQFAAG) is the AHA2 element.

The protein belongs to the HSF family. Class A subfamily. In terms of assembly, homotrimer. In terms of processing, exhibits temperature-dependent phosphorylation.

The protein localises to the nucleus. Transcriptional activator that specifically binds DNA sequence 5'-AGAAnnTTCT-3' known as heat shock promoter elements (HSE). Involved in heat stress response. Activated by DREB2A under heat stress. The polypeptide is Heat stress transcription factor A-3 (HSFA3) (Arabidopsis thaliana (Mouse-ear cress)).